The chain runs to 96 residues: Co-chaperonin GroES (96 aa).

Belongs to the GroES chaperonin family. As to quaternary structure, heptamer of 7 subunits arranged in a ring. Interacts with the chaperonin GroEL.

It localises to the cytoplasm. Together with the chaperonin GroEL, plays an essential role in assisting protein folding. The GroEL-GroES system forms a nano-cage that allows encapsulation of the non-native substrate proteins and provides a physical environment optimized to promote and accelerate protein folding. GroES binds to the apical surface of the GroEL ring, thereby capping the opening of the GroEL channel. The sequence is that of Co-chaperonin GroES from Solidesulfovibrio magneticus (strain ATCC 700980 / DSM 13731 / RS-1) (Desulfovibrio magneticus).